We begin with the raw amino-acid sequence, 455 residues long: Nuclear distribution protein nudF (455 aa).

The 33-residue stretch at 9–41 (QAEELHKSMIAYLVASDLPDTAAALRREVNLSE) folds into the LisH domain. Residues 61 to 88 (TSIARLQKKIMDLESRNATLQSELDNST) adopt a coiled-coil conformation. WD repeat units follow at residues 113–154 (SHRD…RTLK), 156–196 (HTRA…KNIR), 200–239 (GHDHIVSAVRFIPSRNLLVSASRDNDMRIWDVTTGYCVKT), 242–281 (GHTDWVRDVSISFDGRFLFSTGQDMTARLWDISTVSNIEH), 287–347 (GHEN…LMTL), 349–388 (GHDSWVQALVFHPGGKYLLSVSDDKTLRCWDLNQQGKCVK), 392–438 (AHES…IQMR), and 440–455 (VVATGGWDQKLKIFAG). Positions 408 to 431 (KNVPGGDGAAEGEGNDKNGAGSEN) are disordered.

It belongs to the WD repeat LIS1/nudF family. Self-associates. Interacts with nudE and dynein.

The protein resides in the cytoplasm. It is found in the cytoskeleton. It localises to the spindle pole. Positively regulates the activity of the minus-end directed microtubule motor protein dynein. May enhance dynein-mediated microtubule sliding by targeting dynein to the microtubule plus end. Required for nuclear migration during vegetative growth as well as development. Required for retrograde early endosome (EE) transport from the hyphal tip. Required for localization of dynein to the mitotic spindle poles. Recruits additional proteins to the dynein complex at SPBs. The sequence is that of Nuclear distribution protein nudF from Aspergillus flavus (strain ATCC 200026 / FGSC A1120 / IAM 13836 / NRRL 3357 / JCM 12722 / SRRC 167).